The primary structure comprises 267 residues: Undecaprenyl-diphosphatase (267 aa).

7 consecutive transmembrane segments (helical) span residues 1–21, 49–69, 83–103, 111–131, 190–210, 219–239, and 245–265; these read MTLF…FLPV, VGTL…AVAG, AFLA…GLAL, ALRS…VLYW, MLMS…EVAA, DAAI…TLMM, and VSFT…LIIA.

It belongs to the UppP family.

Its subcellular location is the cell inner membrane. It carries out the reaction di-trans,octa-cis-undecaprenyl diphosphate + H2O = di-trans,octa-cis-undecaprenyl phosphate + phosphate + H(+). Its function is as follows. Catalyzes the dephosphorylation of undecaprenyl diphosphate (UPP). Confers resistance to bacitracin. The polypeptide is Undecaprenyl-diphosphatase (Dinoroseobacter shibae (strain DSM 16493 / NCIMB 14021 / DFL 12)).